Consider the following 132-residue polypeptide: Ribosome-binding factor A (132 aa).

Belongs to the RbfA family. In terms of assembly, monomer. Binds 30S ribosomal subunits, but not 50S ribosomal subunits or 70S ribosomes.

It localises to the cytoplasm. One of several proteins that assist in the late maturation steps of the functional core of the 30S ribosomal subunit. Associates with free 30S ribosomal subunits (but not with 30S subunits that are part of 70S ribosomes or polysomes). Required for efficient processing of 16S rRNA. May interact with the 5'-terminal helix region of 16S rRNA. In Pectobacterium atrosepticum (strain SCRI 1043 / ATCC BAA-672) (Erwinia carotovora subsp. atroseptica), this protein is Ribosome-binding factor A.